Reading from the N-terminus, the 107-residue chain is Thioredoxin 1 (107 aa).

The Thioredoxin domain maps to 2–107 (SVAAAVTDAT…TLANTLDKHL (106 aa)). A disulfide bridge links cysteine 32 with cysteine 35.

This sequence belongs to the thioredoxin family.

In terms of biological role, participates in various redox reactions through the reversible oxidation of its active center dithiol to a disulfide and catalyzes dithiol-disulfide exchange reactions. This chain is Thioredoxin 1 (trxA), found in Synechococcus elongatus (strain ATCC 33912 / PCC 7942 / FACHB-805) (Anacystis nidulans R2).